Consider the following 407-residue polypeptide: Imidazolonepropionase (407 aa).

Fe(3+) contacts are provided by His74 and His76. Residues His74 and His76 each contribute to the Zn(2+) site. 4-imidazolone-5-propanoate is bound by residues Arg83, Tyr146, and His179. Tyr146 contributes to the N-formimidoyl-L-glutamate binding site. His244 contributes to the Fe(3+) binding site. His244 is a binding site for Zn(2+). Gln247 serves as a coordination point for 4-imidazolone-5-propanoate. Position 319 (Asp319) interacts with Fe(3+). Asp319 provides a ligand contact to Zn(2+). N-formimidoyl-L-glutamate-binding residues include Asn321 and Gly323. Thr324 is a binding site for 4-imidazolone-5-propanoate.

It belongs to the metallo-dependent hydrolases superfamily. HutI family. Zn(2+) is required as a cofactor. The cofactor is Fe(3+).

Its subcellular location is the cytoplasm. The catalysed reaction is 4-imidazolone-5-propanoate + H2O = N-formimidoyl-L-glutamate. It participates in amino-acid degradation; L-histidine degradation into L-glutamate; N-formimidoyl-L-glutamate from L-histidine: step 3/3. Catalyzes the hydrolytic cleavage of the carbon-nitrogen bond in imidazolone-5-propanoate to yield N-formimidoyl-L-glutamate. It is the third step in the universal histidine degradation pathway. This is Imidazolonepropionase from Salmonella agona (strain SL483).